The sequence spans 155 residues: Endoribonuclease YbeY (155 aa).

His114, His118, and His124 together coordinate Zn(2+).

It belongs to the endoribonuclease YbeY family. Zn(2+) is required as a cofactor.

The protein localises to the cytoplasm. Functionally, single strand-specific metallo-endoribonuclease involved in late-stage 70S ribosome quality control and in maturation of the 3' terminus of the 16S rRNA. This Baumannia cicadellinicola subsp. Homalodisca coagulata protein is Endoribonuclease YbeY.